We begin with the raw amino-acid sequence, 253 residues long: Probable transcriptional regulatory protein Hore_12350 (253 aa).

Residues 1-21 (MAGHSKWANIKHKKAKEDRKR) form a disordered region.

Belongs to the TACO1 family.

It is found in the cytoplasm. The protein is Probable transcriptional regulatory protein Hore_12350 of Halothermothrix orenii (strain H 168 / OCM 544 / DSM 9562).